The sequence spans 175 residues: Major oleosin NAP-II (175 aa).

The interval 1–47 (RRDQYPRDRDQYSMIGRDRDKYSMIGRDRDQYNMYGRDYSKSRQIAK) is polar. 2 repeats span residues 17-26 (RDRDKYSMIG) and 27-36 (RDRDQYNMYG). The hydrophobic stretch occupies residues 48–119 (AVTAVTAGGS…AAITVFSWIY (72 aa)). Helical transmembrane passes span 56-76 (GSLL…LTVA), 78-98 (PLLV…ALLI), and 99-119 (TGFL…SWIY). Residues 151-175 (AQYYGQQQTGGEDDRDRTRGTQHTT) form a disordered region.

This sequence belongs to the oleosin family.

The protein resides in the lipid droplet. Its subcellular location is the membrane. May have a structural role to stabilize the lipid body during desiccation of the seed by preventing coalescence of the oil. Probably interacts with both lipid and phospholipid moieties of lipid bodies. May also provide recognition signals for specific lipase anchorage in lipolysis during seedling growth. In Brassica napus (Rape), this protein is Major oleosin NAP-II.